Reading from the N-terminus, the 103-residue chain is Large ribosomal subunit protein eL14 (103 aa).

The protein belongs to the eukaryotic ribosomal protein eL14 family.

The polypeptide is Large ribosomal subunit protein eL14 (Pyrobaculum neutrophilum (strain DSM 2338 / JCM 9278 / NBRC 100436 / V24Sta) (Thermoproteus neutrophilus)).